The following is a 1563-amino-acid chain: Pentafunctional AROM polypeptide (1563 aa).

A 3-dehydroquinate synthase region spans residues 1–382; that stretch reads MAEPISNPTR…YEPKASVVED (382 aa). Residues 48–50, 82–85, 113–115, and aspartate 118 each bind NAD(+); these read DTN, EYSK, and GGV. Arginine 129 serves as a coordination point for 7-phospho-2-dehydro-3-deoxy-D-arabino-heptonate. 138–139 lines the NAD(+) pocket; sequence TT. Residues aspartate 145 and lysine 151 each contribute to the 7-phospho-2-dehydro-3-deoxy-D-arabino-heptonate site. Lysine 160 provides a ligand contact to NAD(+). Residue asparagine 161 coordinates 7-phospho-2-dehydro-3-deoxy-D-arabino-heptonate. NAD(+) contacts are provided by residues 178-181 and asparagine 189; that span reads FLNT. Position 193 (glutamate 193) interacts with Zn(2+). 7-phospho-2-dehydro-3-deoxy-D-arabino-heptonate contacts are provided by residues 193–196 and lysine 248; that span reads EVIK. Glutamate 258 (proton acceptor; for 3-dehydroquinate synthase activity) is an active-site residue. Residues 262–266 and histidine 269 contribute to the 7-phospho-2-dehydro-3-deoxy-D-arabino-heptonate site; that span reads RNLLN. Histidine 269 provides a ligand contact to Zn(2+). Residue histidine 273 is the Proton acceptor; for 3-dehydroquinate synthase activity of the active site. The 7-phospho-2-dehydro-3-deoxy-D-arabino-heptonate site is built by histidine 285 and lysine 354. Position 285 (histidine 285) interacts with Zn(2+). An EPSP synthase region spans residues 395–834; sequence VFAGVPKDLN…WDTMSNYFKV (440 aa). Cysteine 816 serves as the catalytic For EPSP synthase activity. The shikimate kinase stretch occupies residues 857–1051; sequence PKSIFIIGMR…KKKPHSFFVS (195 aa). 864 to 871 is a binding site for ATP; that stretch reads GMRGAGKS. Positions 1052 to 1265 are 3-dehydroquinase; sequence LTVPNVSKAL…AAPGQLSAAE (214 aa). Histidine 1168 (proton acceptor; for 3-dehydroquinate dehydratase activity) is an active-site residue. The Schiff-base intermediate with substrate; for 3-dehydroquinate dehydratase activity role is filled by lysine 1196. The tract at residues 1278-1563 is shikimate dehydrogenase; sequence PRSFHLFGNP…TDAQAAVMGN (286 aa).

It in the N-terminal section; belongs to the sugar phosphate cyclases superfamily. Dehydroquinate synthase family. This sequence in the 2nd section; belongs to the EPSP synthase family. The protein in the 3rd section; belongs to the shikimate kinase family. In the 4th section; belongs to the type-I 3-dehydroquinase family. It in the C-terminal section; belongs to the shikimate dehydrogenase family. Homodimer. It depends on Zn(2+) as a cofactor.

Its subcellular location is the cytoplasm. The enzyme catalyses 7-phospho-2-dehydro-3-deoxy-D-arabino-heptonate = 3-dehydroquinate + phosphate. The catalysed reaction is 3-dehydroquinate = 3-dehydroshikimate + H2O. It carries out the reaction shikimate + NADP(+) = 3-dehydroshikimate + NADPH + H(+). It catalyses the reaction shikimate + ATP = 3-phosphoshikimate + ADP + H(+). The enzyme catalyses 3-phosphoshikimate + phosphoenolpyruvate = 5-O-(1-carboxyvinyl)-3-phosphoshikimate + phosphate. It functions in the pathway metabolic intermediate biosynthesis; chorismate biosynthesis; chorismate from D-erythrose 4-phosphate and phosphoenolpyruvate: step 2/7. Its pathway is metabolic intermediate biosynthesis; chorismate biosynthesis; chorismate from D-erythrose 4-phosphate and phosphoenolpyruvate: step 3/7. The protein operates within metabolic intermediate biosynthesis; chorismate biosynthesis; chorismate from D-erythrose 4-phosphate and phosphoenolpyruvate: step 4/7. It participates in metabolic intermediate biosynthesis; chorismate biosynthesis; chorismate from D-erythrose 4-phosphate and phosphoenolpyruvate: step 5/7. It functions in the pathway metabolic intermediate biosynthesis; chorismate biosynthesis; chorismate from D-erythrose 4-phosphate and phosphoenolpyruvate: step 6/7. Functionally, the AROM polypeptide catalyzes 5 consecutive enzymatic reactions in prechorismate polyaromatic amino acid biosynthesis. This is Pentafunctional AROM polypeptide from Neurospora crassa (strain ATCC 24698 / 74-OR23-1A / CBS 708.71 / DSM 1257 / FGSC 987).